We begin with the raw amino-acid sequence, 99 residues long: Large ribosomal subunit protein uL23 (99 aa).

This sequence belongs to the universal ribosomal protein uL23 family. As to quaternary structure, part of the 50S ribosomal subunit. Contacts protein L29, and trigger factor when it is bound to the ribosome.

In terms of biological role, one of the early assembly proteins it binds 23S rRNA. One of the proteins that surrounds the polypeptide exit tunnel on the outside of the ribosome. Forms the main docking site for trigger factor binding to the ribosome. This is Large ribosomal subunit protein uL23 from Pseudomonas fluorescens (strain SBW25).